A 440-amino-acid polypeptide reads, in one-letter code: MTSIKEQAAISRLLSFLQEWDNAGKVARSHILDKFIETNQGKTAPELEQEFSQGASLFLVRLTTSLRITYMTDSCLEKLLRSIGIFLSAVSSNRYLIEFLEVGGVLTLLEILGLEKIKEEAKKESVKLLQVIANSGRTYKELICESYGVRSIAEFLAKSKSEETQEEVQVLLDSLVHGNPKYQNQVYKGLIALLPCESPKAQQLSLQTLRTAQPIIGTTHPSIVDCVLKVLGTMHLEVQYEAIELIKDLVGYDVRQALLKGLVALLIPSVKEISKLQAKILSDPSVLQLTPSLPMFLQQAAAAKAIGVLARNDMSIAEELLYLRVVRGLMAAMGNTDHSNSQRLASLTLECFVQMFPLVAEHVRKCMGEELYQLFLSNAEDLYMKIDSIQADILAANTVNVTKALCLHGSSYSMNTLYGSRDSAQMAYLTHFEEDVESKE.

This Homo sapiens (Human) protein is Armadillo-like helical domain containing protein 1.